The sequence spans 217 residues: Ependymin (217 aa).

The first 20 residues, Met-1–Ala-20, serve as a signal peptide directing secretion. N-linked (GlcNAc...) asparagine glycans are attached at residues Asn-73 and Asn-96.

This sequence belongs to the ependymin family. Forms disulfide-linked dimers. In terms of processing, binds calcium through the terminal sialic acids. EPDs are synthesized in the meninx and secreted in the cerebrospinal fluid.

The protein localises to the secreted. In terms of biological role, may play a role in neural plasticity. May be involved during axon regeneration. This chain is Ependymin (epd), found in Danio rerio (Zebrafish).